Here is a 308-residue protein sequence, read N- to C-terminus: MTSDDTVWPGAGRSIETLAALSPGQAEAVLALLDEAARVDGQPAVSEQGRLQLRGGEREGVRHLLLSAGDTLVGYAQLEDTDPVEAPAAELVVHPAHRGRGHGRALGTALLAATGKRLRAWAHGGHSAARHLAQVLGLTLFRELRQMRRPLAGLDLAEPKLPDGVTVRAFVPGQDDAAWLAVNAAAFAHHPEQGSLTQRDLDDRKAEPWFDPAGFFLAERDGELIGFHWTKVHAQEGIGEVYVLGVRPGAQGGGLGKALTTIGLRHLEAQGLPTAMLYVDADNKAAVSVYERLGFATHETDLMYRTES.

N-acetyltransferase domains are found at residues 16 to 152 and 165 to 308; these read ETLA…RPLA and VTVR…RTES. 1D-myo-inositol 2-(L-cysteinylamino)-2-deoxy-alpha-D-glucopyranoside is bound at residue Glu47. 91-93 lines the acetyl-CoA pocket; the sequence is LVV. 1D-myo-inositol 2-(L-cysteinylamino)-2-deoxy-alpha-D-glucopyranoside-binding residues include Glu192, Lys231, and Glu240. Acetyl-CoA-binding positions include 244–246 and 251–257; these read LGV and QGGGLGK. Tyr278 contributes to the 1D-myo-inositol 2-(L-cysteinylamino)-2-deoxy-alpha-D-glucopyranoside binding site.

The protein belongs to the acetyltransferase family. MshD subfamily. As to quaternary structure, monomer.

The catalysed reaction is 1D-myo-inositol 2-(L-cysteinylamino)-2-deoxy-alpha-D-glucopyranoside + acetyl-CoA = mycothiol + CoA + H(+). Its function is as follows. Catalyzes the transfer of acetyl from acetyl-CoA to desacetylmycothiol (Cys-GlcN-Ins) to form mycothiol. This Streptomyces avermitilis (strain ATCC 31267 / DSM 46492 / JCM 5070 / NBRC 14893 / NCIMB 12804 / NRRL 8165 / MA-4680) protein is Mycothiol acetyltransferase.